The sequence spans 172 residues: MEEYAREPCPWRIVDDCGGAFTMGVIGGGVFQAIKGFRNAPVGIRHRLRGSANAVRIRAPQIGGSFAVWGGLFSTIDCGLVRLRGKEDPWNSITSGALTGAVLAARSGPLAMVGSAMMGGILLALIEGVGILLTRYTAQQFRNAPPFLEDPSQLPPKDGTPAPGYPSYQQYH.

An intrachain disulfide couples C9 to C78. 3 helical membrane-spanning segments follow: residues 17 to 37, 61 to 77, and 113 to 133; these read CGGA…IKGF, QIGG…STID, and VGSA…GILL. Residues 146-172 form a disordered region; the sequence is PFLEDPSQLPPKDGTPAPGYPSYQQYH.

This sequence belongs to the Tim17/Tim22/Tim23 family. As to quaternary structure, component of the TIM23 complex at least composed of TIMM23, TIMM17 (TIMM17A or TIMM17B) and TIMM50. The complex interacts with the TIMM44 component of the PAM complex and with DNAJC15. In terms of processing, forms one disulfide bond. As to expression, expression is abundant in heart and skeletal muscle, intermediate in brain, and weak in pancreas, placenta, kidney and liver.

It localises to the mitochondrion inner membrane. Essential component of the TIM23 complex, a complex that mediates the translocation of transit peptide-containing proteins across the mitochondrial inner membrane. The protein is Mitochondrial import inner membrane translocase subunit Tim17-B (TIMM17B) of Homo sapiens (Human).